Here is a 135-residue protein sequence, read N- to C-terminus: Large ribosomal subunit protein uL16c (135 aa).

It belongs to the universal ribosomal protein uL16 family. Part of the 50S ribosomal subunit.

The protein resides in the plastid. It localises to the chloroplast. The polypeptide is Large ribosomal subunit protein uL16c (Lotus japonicus (Lotus corniculatus var. japonicus)).